The chain runs to 185 residues: Ribosome-recycling factor (185 aa).

This sequence belongs to the RRF family.

It is found in the cytoplasm. Its function is as follows. Responsible for the release of ribosomes from messenger RNA at the termination of protein biosynthesis. May increase the efficiency of translation by recycling ribosomes from one round of translation to another. The sequence is that of Ribosome-recycling factor from Streptococcus gordonii (strain Challis / ATCC 35105 / BCRC 15272 / CH1 / DL1 / V288).